Here is a 214-residue protein sequence, read N- to C-terminus: Octanoyltransferase (214 aa).

The BPL/LPL catalytic domain occupies Gly36–Gln214. Substrate is bound by residues Arg75–His82, Ala147–Gly149, and Gly160–Ser162. Catalysis depends on Cys178, which acts as the Acyl-thioester intermediate.

The protein belongs to the LipB family.

The protein localises to the cytoplasm. It carries out the reaction octanoyl-[ACP] + L-lysyl-[protein] = N(6)-octanoyl-L-lysyl-[protein] + holo-[ACP] + H(+). It functions in the pathway protein modification; protein lipoylation via endogenous pathway; protein N(6)-(lipoyl)lysine from octanoyl-[acyl-carrier-protein]: step 1/2. In terms of biological role, catalyzes the transfer of endogenously produced octanoic acid from octanoyl-acyl-carrier-protein onto the lipoyl domains of lipoate-dependent enzymes. Lipoyl-ACP can also act as a substrate although octanoyl-ACP is likely to be the physiological substrate. The sequence is that of Octanoyltransferase from Anaplasma marginale (strain Florida).